Here is a 180-residue protein sequence, read N- to C-terminus: Dual-action ribosomal maturation protein DarP (180 aa).

Positions 1–13 (MKPDKTENTEHGI) are enriched in basic and acidic residues. Residues 1–21 (MKPDKTENTEHGIEPVSKTKR) form a disordered region.

The protein belongs to the DarP family.

Its subcellular location is the cytoplasm. Functionally, member of a network of 50S ribosomal subunit biogenesis factors which assembles along the 30S-50S interface, preventing incorrect 23S rRNA structures from forming. Promotes peptidyl transferase center (PTC) maturation. The chain is Dual-action ribosomal maturation protein DarP from Methylobacillus flagellatus (strain ATCC 51484 / DSM 6875 / VKM B-1610 / KT).